A 706-amino-acid polypeptide reads, in one-letter code: Frizzled-6 (706 aa).

An N-terminal signal peptide occupies residues 1–18; it reads MEMFTFLLTCIFLPLLRG. One can recognise an FZ domain in the interval 19–132; the sequence is HSLFTCEPIT…CDRLQYCDET (114 aa). Topologically, residues 19-201 are extracellular; it reads HSLFTCEPIT…SDELEFAKSF (183 aa). 5 disulfides stabilise this stretch: Cys24-Cys85, Cys32-Cys78, Cys69-Cys106, Cys95-Cys129, and Cys99-Cys123. Residue Asn38 is glycosylated (N-linked (GlcNAc...) asparagine). A helical transmembrane segment spans residues 202 to 222; that stretch reads IGTVSIFCLCATLFTFLTFLI. Topologically, residues 223 to 233 are cytoplasmic; the sequence is DVRRFRYPERP. The chain crosses the membrane as a helical span at residues 234 to 254; sequence IIYYSVCYSIVSLMYFIGFLL. Residues 255-284 lie on the Extracellular side of the membrane; sequence GDSTACNKADEKLELGDTVVLGSQNKACTV. Residues 285–305 form a helical membrane-spanning segment; the sequence is LFMLLYFFTMAGTVWWVILTI. Topologically, residues 306–324 are cytoplasmic; sequence TWFLAAGRKWSCEAIEQKA. Residues 325 to 345 form a helical membrane-spanning segment; sequence VWFHAVAWGTPGFLTVMLLAM. The Extracellular segment spans residues 346–370; it reads NKVEGDNISGVCFVGLYDLDASRYF. N-linked (GlcNAc...) asparagine glycosylation occurs at Asn352. Residues 371–391 traverse the membrane as a helical segment; that stretch reads VLLPLCLCVFVGLSLLLAGII. At 392 to 416 the chain is on the cytoplasmic side; sequence SLNHVRQVIQHDGRNQEKLKKFMIR. The helical transmembrane segment at 417–437 threads the bilayer; sequence IGVFSGLYLVPLVTLLGCYVY. The Extracellular portion of the chain corresponds to 438–473; the sequence is EQVNRITWEITWVSDHCRQYHIPCPYQAKAKARPEL. Residues 474–494 form a helical membrane-spanning segment; that stretch reads ALFMIKYLMTLIVGISAVFWV. Topologically, residues 495–706 are cytoplasmic; it reads GSKKTCTEWA…EQGGGCHSDT (212 aa). The short motif at 498–503 is the Lys-Thr-X-X-X-Trp motif, mediates interaction with the PDZ domain of Dvl family members element; that stretch reads KTCTEW. Positions 588 to 706 are disordered; sequence EIQTSPETSM…EQGGGCHSDT (119 aa). Residues 646–658 are compositionally biased toward basic and acidic residues; that stretch reads ARSEGRISPKSDI. Ser653 carries the phosphoserine modification. Positions 662–672 are enriched in polar residues; it reads GLAQSNNLQVP. Residues 673 to 685 are compositionally biased toward low complexity; sequence SSSEPSSLKGSTS. Positions 694–706 are enriched in basic and acidic residues; the sequence is VRKEQGGGCHSDT.

The protein belongs to the G-protein coupled receptor Fz/Smo family. In terms of assembly, interacts with LMBR1L. Post-translationally, ubiquitinated by ZNRF3, leading to its degradation by the proteasome. In terms of tissue distribution, detected in adult heart, brain, placenta, lung, liver, skeletal muscle, kidney, pancreas, thymus, prostate, testis, ovary, small intestine and colon. In the fetus, expressed in brain, lung, liver and kidney.

Its subcellular location is the membrane. The protein localises to the cell membrane. It localises to the cell surface. It is found in the apical cell membrane. The protein resides in the cytoplasmic vesicle membrane. Its subcellular location is the endoplasmic reticulum membrane. Its function is as follows. Receptor for Wnt proteins. Most of frizzled receptors are coupled to the beta-catenin canonical signaling pathway, which leads to the activation of disheveled proteins, inhibition of GSK-3 kinase, nuclear accumulation of beta-catenin and activation of Wnt target genes. A second signaling pathway involving PKC and calcium fluxes has been seen for some family members, but it is not yet clear if it represents a distinct pathway or if it can be integrated in the canonical pathway, as PKC seems to be required for Wnt-mediated inactivation of GSK-3 kinase. Both pathways seem to involve interactions with G-proteins. May be involved in transduction and intercellular transmission of polarity information during tissue morphogenesis and/or in differentiated tissues. Together with FZD3, is involved in the neural tube closure and plays a role in the regulation of the establishment of planar cell polarity (PCP), particularly in the orientation of asymmetric bundles of stereocilia on the apical faces of a subset of auditory and vestibular sensory cells located in the inner ear. The protein is Frizzled-6 (FZD6) of Homo sapiens (Human).